We begin with the raw amino-acid sequence, 349 residues long: Increased DNA methylation 2 (349 aa).

The tract at residues 210–230 is disordered; that stretch reads EDNAGTCTSGEESDVAAKPEV. Positions 233 to 349 constitute a sHSP domain; sequence EAHGGLMVGL…VMKNLQKQTV (117 aa).

Belongs to the small heat shock protein (HSP20) family. Homodimer or oligomer. May form an 16-mer complex. Interacts with MBD7 (via C-terminus). Interacts with IDM1 (via N-terminus). Interacts with IMD3. Part of a complex made of MBD7, IDM1, IDM2, IDM3 and ROS1. As to expression, expressed in cotyledons and hypocotyls in young seedlings.

It localises to the nucleus. Its subcellular location is the nucleoplasm. Its function is as follows. Prevents DNA hypermethylation and transcriptional silencing of transgenes and of some endogenous genes. May act as a molecular chaperone of IDM1, regulating its H3K18 acetylation activity. The chain is Increased DNA methylation 2 from Arabidopsis thaliana (Mouse-ear cress).